The chain runs to 118 residues: UPF0102 protein ROP_66030 (118 aa).

It belongs to the UPF0102 family.

The sequence is that of UPF0102 protein ROP_66030 from Rhodococcus opacus (strain B4).